Consider the following 507-residue polypeptide: Maturase K (507 aa).

It belongs to the intron maturase 2 family. MatK subfamily.

It localises to the plastid. It is found in the chloroplast. In terms of biological role, usually encoded in the trnK tRNA gene intron. Probably assists in splicing its own and other chloroplast group II introns. The chain is Maturase K from Kalmia buxifolia (Sand myrtle).